The sequence spans 431 residues: Enolase (431 aa).

A (2R)-2-phosphoglycerate-binding site is contributed by Gln-163. Glu-205 (proton donor) is an active-site residue. Residues Asp-242, Glu-288, and Asp-315 each contribute to the Mg(2+) site. Positions 340, 369, 370, and 391 each coordinate (2R)-2-phosphoglycerate. The Proton acceptor role is filled by Lys-340.

Belongs to the enolase family. The cofactor is Mg(2+).

The protein localises to the cytoplasm. Its subcellular location is the secreted. It is found in the cell surface. It carries out the reaction (2R)-2-phosphoglycerate = phosphoenolpyruvate + H2O. The protein operates within carbohydrate degradation; glycolysis; pyruvate from D-glyceraldehyde 3-phosphate: step 4/5. Functionally, catalyzes the reversible conversion of 2-phosphoglycerate (2-PG) into phosphoenolpyruvate (PEP). It is essential for the degradation of carbohydrates via glycolysis. This Bacillus mycoides (strain KBAB4) (Bacillus weihenstephanensis) protein is Enolase.